We begin with the raw amino-acid sequence, 592 residues long: Tetrathionate sensor histidine kinase TtrS (592 aa).

A run of 2 helical transmembrane segments spans residues Val11–Ile31 and Val307–Leu327. Residues Gly364 to Asn581 enclose the Histidine kinase domain. At His367 the chain carries Phosphohistidine; by autocatalysis.

Autophosphorylated.

The protein resides in the cell inner membrane. The catalysed reaction is ATP + protein L-histidine = ADP + protein N-phospho-L-histidine.. In terms of biological role, member of the two-component regulatory system TtrR/TtrS, which is required for synthesis of tetrathionate reductase. Probably functions as a sensor protein kinase which is autophosphorylated at a histidine residue in response to tetrathionate, and transfers its phosphate group to TtrR. During mice infection, the ability to use tetrathionate as an electron acceptor is a growth advantage for S.typhimurium over the competing microbiota in the lumen of the inflamed gut. The polypeptide is Tetrathionate sensor histidine kinase TtrS (ttrS) (Salmonella typhimurium (strain LT2 / SGSC1412 / ATCC 700720)).